The chain runs to 63 residues: ATP synthase F(0) complex subunit 8 (63 aa).

The helical transmembrane segment at 8–24 (TWLLTILSMLLTLFVLF) threads the bilayer. Lys57 is subject to N6-acetyllysine.

The protein belongs to the ATPase protein 8 family. As to quaternary structure, component of the ATP synthase complex composed at least of ATP5F1A/subunit alpha, ATP5F1B/subunit beta, ATP5MC1/subunit c (homooctomer), MT-ATP6/subunit a, MT-ATP8/subunit 8, ATP5ME/subunit e, ATP5MF/subunit f, ATP5MG/subunit g, ATP5MK/subunit k, ATP5MJ/subunit j, ATP5F1C/subunit gamma, ATP5F1D/subunit delta, ATP5F1E/subunit epsilon, ATP5PF/subunit F6, ATP5PB/subunit b, ATP5PD/subunit d, ATP5PO/subunit OSCP. ATP synthase complex consists of a soluble F(1) head domain (subunits alpha(3) and beta(3)) - the catalytic core - and a membrane F(0) domain - the membrane proton channel (subunits c, a, 8, e, f, g, k and j). These two domains are linked by a central stalk (subunits gamma, delta, and epsilon) rotating inside the F1 region and a stationary peripheral stalk (subunits F6, b, d, and OSCP). Interacts with PRICKLE3.

Its subcellular location is the mitochondrion membrane. Subunit 8, of the mitochondrial membrane ATP synthase complex (F(1)F(0) ATP synthase or Complex V) that produces ATP from ADP in the presence of a proton gradient across the membrane which is generated by electron transport complexes of the respiratory chain. ATP synthase complex consist of a soluble F(1) head domain - the catalytic core - and a membrane F(1) domain - the membrane proton channel. These two domains are linked by a central stalk rotating inside the F(1) region and a stationary peripheral stalk. During catalysis, ATP synthesis in the catalytic domain of F(1) is coupled via a rotary mechanism of the central stalk subunits to proton translocation. In vivo, can only synthesize ATP although its ATP hydrolase activity can be activated artificially in vitro. Part of the complex F(0) domain. This chain is ATP synthase F(0) complex subunit 8, found in Balaenoptera musculus (Blue whale).